A 134-amino-acid polypeptide reads, in one-letter code: Fatty acid-binding protein 5 (134 aa).

A Nuclear localization signal motif is present at residues 23 to 33; that stretch reads KELGVGMAMRK. Hexadecanoate is bound by residues Arg109 and 129-131; that span reads RVY. Residues Arg109 and Tyr131 each coordinate N-eicosanoyl ethanolamine. 129-131 is a binding site for (9Z,12Z)-octadecadienoate; it reads RVY.

Belongs to the calycin superfamily. Fatty-acid binding protein (FABP) family. As to quaternary structure, monomer.

The protein resides in the cytoplasm. It is found in the nucleus. The protein localises to the synapse. It localises to the postsynaptic density. Its subcellular location is the secreted. It catalyses the reaction hexadecanoate(out) = hexadecanoate(in). The enzyme catalyses (9Z,12Z)-octadecadienoate(out) = (9Z,12Z)-octadecadienoate(in). The catalysed reaction is (9Z)-octadecenoate(out) = (9Z)-octadecenoate(in). Intracellular carrier for long-chain fatty acids and related active lipids, such as endocannabinoids, that regulate the metabolism and actions of the ligands they bind. In addition to the cytosolic transport, selectively delivers specific fatty acids from the cytosol to the nucleus, wherein they activate nuclear receptors. Delivers retinoic acid to the nuclear receptor peroxisome proliferator-activated receptor delta; which promotes proliferation and survival. May also serve as a synaptic carrier of endocannabinoid at central synapses and thus controls retrograde endocannabinoid signaling. Modulates inflammation by regulating PTGES induction via NF-kappa-B activation, and prostaglandin E2 (PGE2) biosynthesis during inflammation. Has the highest binding affinity for docosahexaenoic acid (DHA) and decreasing relative affinity for eicosapentaenoic acid (EPA), alpha-linolenic acid (ALA), oleic acid, palmitic acid, linoleic acid and stearic acid, respectively. This chain is Fatty acid-binding protein 5, found in Pygoscelis papua (Gentoo penguin).